The following is a 178-amino-acid chain: ATP-dependent protease subunit HslV (178 aa).

T5 is a catalytic residue. S161, C164, and T167 together coordinate Na(+).

This sequence belongs to the peptidase T1B family. HslV subfamily. As to quaternary structure, a double ring-shaped homohexamer of HslV is capped on each side by a ring-shaped HslU homohexamer. The assembly of the HslU/HslV complex is dependent on binding of ATP.

It is found in the cytoplasm. The enzyme catalyses ATP-dependent cleavage of peptide bonds with broad specificity.. Its activity is regulated as follows. Allosterically activated by HslU binding. Functionally, protease subunit of a proteasome-like degradation complex believed to be a general protein degrading machinery. This is ATP-dependent protease subunit HslV from Syntrophomonas wolfei subsp. wolfei (strain DSM 2245B / Goettingen).